An 81-amino-acid chain; its full sequence is MTMSLEVFEKLESKVQQAIDTITLLQMEIEELKEKNNTLVQEVQSAQHGREELERENSQLKEQQQGWQERLQALLGRMEEV.

Residues 5–81 adopt a coiled-coil conformation; it reads LEVFEKLESK…QALLGRMEEV (77 aa). The interval 43–64 is disordered; that stretch reads VQSAQHGREELERENSQLKEQQ. The segment covering 48 to 59 has biased composition (basic and acidic residues); it reads HGREELERENSQ.

It belongs to the ZapB family. In terms of assembly, homodimer. The ends of the coiled-coil dimer bind to each other, forming polymers. Interacts with FtsZ.

The protein resides in the cytoplasm. In terms of biological role, non-essential, abundant cell division factor that is required for proper Z-ring formation. It is recruited early to the divisome by direct interaction with FtsZ, stimulating Z-ring assembly and thereby promoting cell division earlier in the cell cycle. Its recruitment to the Z-ring requires functional FtsA or ZipA. This is Cell division protein ZapB from Klebsiella pneumoniae subsp. pneumoniae (strain ATCC 700721 / MGH 78578).